A 683-amino-acid polypeptide reads, in one-letter code: Inositol-trisphosphate 3-kinase C (683 aa).

The disordered stretch occupies residues 1-124; that stretch reads MRRCPCRGSL…PDRSSLRTHL (124 aa). Residues 13-22 are compositionally biased toward low complexity; the sequence is AEAGALPAAA. Residues 44 to 58 show a composition bias toward gly residues; sequence PGAGAPAGRPEGGGP. A compositionally biased stretch (basic and acidic residues) spans 105–124; the sequence is ETERPKQKTEPDRSSLRTHL. A phosphoserine mark is found at S127 and S162. Positions 147-308 are disordered; sequence TDPHRSDLQF…EDGPLEEPEP (162 aa). Over residues 196–206 the composition is skewed to polar residues; it reads WTHQNSSSLQT. The span at 249 to 259 shows a compositional bias: basic and acidic residues; the sequence is SQKKQDTEAAR. The segment covering 267 to 289 has biased composition (polar residues); sequence FQIQQDTDGSWTQPSTDGSQTAP. Positions 297–308 are enriched in acidic residues; sequence EPEDGPLEEPEP. Residues 324-332 carry the Nuclear export signal motif; the sequence is LCPVPRLII. The tract at residues 334 to 387 is disordered; the sequence is PETPEPEAQPVGPPSRVEGGSGGFSSASSFDESEDDVVAGGGGASDPEDRSGSK. T336 carries the post-translational modification Phosphothreonine. S404 bears the Phosphoserine mark. Residues K431, 471–473, and D484 contribute to the ATP site; that span reads EDL. Substrate-binding positions include K486, 507–513, and 534–541; these read RKDMYEK and KPRYMQWR. The tract at residues 509-517 is calmodulin-binding; the sequence is DMYEKMVAV. ATP is bound by residues K558 and D638. K641 is a binding site for substrate.

It belongs to the inositol phosphokinase (IPK) family. Highly expressed in pancreas, skeletal muscle, liver, placenta and weakly in kidney and brain.

The protein resides in the nucleus. The protein localises to the cytoplasm. It carries out the reaction 1D-myo-inositol 1,4,5-trisphosphate + ATP = 1D-myo-inositol 1,3,4,5-tetrakisphosphate + ADP + H(+). Its activity is regulated as follows. Activated by calcium/calmodulin. Inhibited by high concentrations of the substrate Ins(1,2,4)P3, and allosterically activated by the product Ins(1,3,4,5)P4. Functionally, catalyzes the phosphorylation of 1D-myo-inositol 1,4,5-trisphosphate (InsP3) into 1D-myo-inositol 1,3,4,5-tetrakisphosphate and participates to the regulation of calcium homeostasis. Can phosphorylate inositol 2,4,5-triphosphate to inositol 2,4,5,6-tetraphosphate. The sequence is that of Inositol-trisphosphate 3-kinase C from Homo sapiens (Human).